The chain runs to 445 residues: Protein phosphatase 2C 53 (445 aa).

Residues 124 to 435 enclose the PPM-type phosphatase domain; sequence LWGLESICGR…DNITVVVIDL (312 aa). Asp-180, Gly-181, Asp-362, and Asp-426 together coordinate Mn(2+).

The protein belongs to the PP2C family. In terms of assembly, interacts with PYL10, SAPK8 and SAPK10. Binding to PYL10 is dependent on the presence of abscisic acid (ABA). Interacts with PYL3, PYL5, PYL9 and PYL10. Binding to PYL9 and PYL10 is dependent on the presence of ABA. Mg(2+) serves as cofactor. Requires Mn(2+) as cofactor. In terms of tissue distribution, expressed in leaf blades, leaf sheaths and lamina joints. Expressed at low levels in roots, stems, flowers and panicles.

It is found in the cytoplasm. It localises to the cytosol. The protein resides in the nucleus. The enzyme catalyses O-phospho-L-seryl-[protein] + H2O = L-seryl-[protein] + phosphate. It catalyses the reaction O-phospho-L-threonyl-[protein] + H2O = L-threonyl-[protein] + phosphate. Repressed by abscisic acid-bound PYL1. Protein phosphatase that acts as a negative regulator of abscisic acid (ABA) signaling. Involved in the regulation of root architecture development and drought resistance. Can dephosphorylate SAPK8 and SAPK10 in vitro. Together with PYL10, SAPK8 and SAPK10, may form an ABA signaling module involved in stress response. The sequence is that of Protein phosphatase 2C 53 from Oryza sativa subsp. japonica (Rice).